The following is a 150-amino-acid chain: Ribosomal RNA large subunit methyltransferase H (150 aa).

Residues leucine 71, glycine 100, and 118–123 (FSQMTF) each bind S-adenosyl-L-methionine.

The protein belongs to the RNA methyltransferase RlmH family. As to quaternary structure, homodimer.

The protein resides in the cytoplasm. It carries out the reaction pseudouridine(1915) in 23S rRNA + S-adenosyl-L-methionine = N(3)-methylpseudouridine(1915) in 23S rRNA + S-adenosyl-L-homocysteine + H(+). Specifically methylates the pseudouridine at position 1915 (m3Psi1915) in 23S rRNA. The polypeptide is Ribosomal RNA large subunit methyltransferase H (Mycoplasmopsis agalactiae (strain NCTC 10123 / CIP 59.7 / PG2) (Mycoplasma agalactiae)).